We begin with the raw amino-acid sequence, 66 residues long: Conotoxin Ca5.2 (66 aa).

Residues 1–22 form the signal peptide; it reads MRCVPVFLILLGLIASAPSVDA. Residues 23–48 constitute a propeptide that is removed on maturation; that stretch reads RPQTKDDALASFHDSAKRHLQRLVNA. F62 carries the post-translational modification Phenylalanine amide.

This sequence belongs to the conotoxin T superfamily. In terms of processing, contains 2 disulfide bonds that can be either 'C1-C3, C2-C4' or 'C1-C4, C2-C3', since these disulfide connectivities have been observed for conotoxins with cysteine framework V (for examples, see AC P0DQQ7 and AC P81755). In terms of tissue distribution, expressed by the venom duct.

It is found in the secreted. This Conus caracteristicus (Characteristic cone) protein is Conotoxin Ca5.2.